The following is a 287-amino-acid chain: Large ribosomal subunit protein uL2 (287 aa).

The interval 221-287 (RGSVMNPCDH…SKRSRGGRDS (67 aa)) is disordered. Basic residues predominate over residues 271–287 (LRKRRKTSKRSRGGRDS).

It belongs to the universal ribosomal protein uL2 family. Part of the 50S ribosomal subunit. Forms a bridge to the 30S subunit in the 70S ribosome.

In terms of biological role, one of the primary rRNA binding proteins. Required for association of the 30S and 50S subunits to form the 70S ribosome, for tRNA binding and peptide bond formation. It has been suggested to have peptidyltransferase activity; this is somewhat controversial. Makes several contacts with the 16S rRNA in the 70S ribosome. The chain is Large ribosomal subunit protein uL2 from Synechococcus sp. (strain CC9605).